A 505-amino-acid polypeptide reads, in one-letter code: MSTRTARPLGPQLALAGTVGKRVDVLVIGLTSSSDGPEIALGDGIVDEAVLTGLLDTLVAVGASGKAEETTRIPAPDTLPVDSVLAVGLGSAEKLDAEQIRKSAGAAARTLSGVGTAATTLSVLDLGAAAEGFALGAYRFTEFKSAKSAPGPDAQPVARVELLVSSPRAKESKDTLARSAAIAEAVATAREFVNTPPSHLFPAEFADRAKELGTDSGLKVEVLDEKALEKNGYGGILGVGKGSSRLPRLVRLSYSAKKRNAPKVALVGKGITFDTGGISIKPAAGMENMTSDMGGAAAVVATVVLAAKLGLPVDVTATVPMAENMPSSTAQRPGDVLTQYGGTTVEVINTDAEGRLVLADAIVRACEDDPDYLIDTATLTGAQMVALGNRTPGVMGTDAFRDRVAAISQEIGENAWAMPMPAELRSDLDSKIADLANVTNHRWGGMLAAALYLKEFVADGVQWAHIDVAGPAYNSSGPWGYTGRGGTGVPVRTMISVIEDIAAHG.

Mn(2+) is bound by residues Lys269 and Asp274. The active site involves Lys281. Residues Asp292, Asp351, and Glu353 each coordinate Mn(2+). Residue Arg355 is part of the active site.

The protein belongs to the peptidase M17 family. It depends on Mn(2+) as a cofactor.

Its subcellular location is the cytoplasm. It carries out the reaction Release of an N-terminal amino acid, Xaa-|-Yaa-, in which Xaa is preferably Leu, but may be other amino acids including Pro although not Arg or Lys, and Yaa may be Pro. Amino acid amides and methyl esters are also readily hydrolyzed, but rates on arylamides are exceedingly low.. It catalyses the reaction Release of an N-terminal amino acid, preferentially leucine, but not glutamic or aspartic acids.. Its function is as follows. Presumably involved in the processing and regular turnover of intracellular proteins. Catalyzes the removal of unsubstituted N-terminal amino acids from various peptides. The sequence is that of Probable cytosol aminopeptidase from Rhodococcus opacus (strain B4).